We begin with the raw amino-acid sequence, 132 residues long: Ribosome-binding factor A (132 aa).

It belongs to the RbfA family. As to quaternary structure, monomer. Binds 30S ribosomal subunits, but not 50S ribosomal subunits or 70S ribosomes.

Its subcellular location is the cytoplasm. In terms of biological role, one of several proteins that assist in the late maturation steps of the functional core of the 30S ribosomal subunit. Associates with free 30S ribosomal subunits (but not with 30S subunits that are part of 70S ribosomes or polysomes). Required for efficient processing of 16S rRNA. May interact with the 5'-terminal helix region of 16S rRNA. The polypeptide is Ribosome-binding factor A (Prochlorococcus marinus (strain MIT 9515)).